Here is a 150-residue protein sequence, read N- to C-terminus: T-complex protein 1 subunit beta (150 aa).

Asp-35 is a binding site for Mg(2+). ADP-binding residues include Gly-36, Thr-37, Thr-38, and Ser-39. Positions 36, 37, and 38 each coordinate ATP.

It belongs to the TCP-1 chaperonin family. Component of the chaperonin-containing T-complex (TRiC), a hexadecamer composed of two identical back-to-back stacked rings enclosing a protein folding chamber. Each ring is made up of eight different subunits: TCP1/CCT1, CCT2, CCT3, CCT4, CCT5, CCT6A/CCT6, CCT7, CCT8. Interacts with PACRG. Interacts with FLCN. Interacts with DLEC1. Interacts with SVEP1.

It localises to the cytoplasm. It catalyses the reaction ATP + H2O = ADP + phosphate + H(+). Functionally, component of the chaperonin-containing T-complex (TRiC), a molecular chaperone complex that assists the folding of actin, tubulin and other proteins upon ATP hydrolysis. The TRiC complex mediates the folding of WRAP53/TCAB1, thereby regulating telomere maintenance. As part of the TRiC complex may play a role in the assembly of BBSome, a complex involved in ciliogenesis regulating transports vesicles to the cilia. This chain is T-complex protein 1 subunit beta, found in Mesocricetus auratus (Golden hamster).